The chain runs to 240 residues: Insulin-like growth factor-binding protein 3 receptor (240 aa).

The N-terminal stretch at Met-1–Gly-38 is a signal peptide. At Ser-39–Arg-204 the chain is on the extracellular side. N-linked (GlcNAc...) asparagine glycosylation is found at Asn-73, Asn-101, and Asn-167. A helical membrane pass occupies residues Leu-205–Met-225. Residues Cys-226 to Leu-240 are Cytoplasmic-facing.

In terms of assembly, interacts with IGFBP3. Interacts with CASP8. In terms of tissue distribution, widely expressed in normal tissues but suppressed in prostate and breast tumor.

It localises to the cell membrane. Functionally, cell death receptor specific for IGFBP3, may mediate caspase-8-dependent apoptosis upon ligand binding. This chain is Insulin-like growth factor-binding protein 3 receptor (TMEM219), found in Homo sapiens (Human).